A 749-amino-acid polypeptide reads, in one-letter code: 5-methyltetrahydropteroyltriglutamate--homocysteine methyltransferase (749 aa).

Residues arginine 15–lysine 18 and lysine 114 each bind 5-methyltetrahydropteroyltri-L-glutamate. Residues isoleucine 425–serine 427 and glutamate 478 each bind L-homocysteine. L-methionine-binding positions include isoleucine 425–serine 427 and glutamate 478. Tryptophan 555 lines the 5-methyltetrahydropteroyltri-L-glutamate pocket. Aspartate 593 lines the L-homocysteine pocket. Aspartate 593 is a binding site for L-methionine. Glutamate 599 contacts 5-methyltetrahydropteroyltri-L-glutamate. Zn(2+) is bound by residues histidine 636, cysteine 638, and glutamate 660. The active-site Proton donor is histidine 689. Cysteine 721 contributes to the Zn(2+) binding site.

Belongs to the vitamin-B12 independent methionine synthase family. Zn(2+) is required as a cofactor.

It carries out the reaction 5-methyltetrahydropteroyltri-L-glutamate + L-homocysteine = tetrahydropteroyltri-L-glutamate + L-methionine. The protein operates within amino-acid biosynthesis; L-methionine biosynthesis via de novo pathway; L-methionine from L-homocysteine (MetE route): step 1/1. Functionally, catalyzes the transfer of a methyl group from 5-methyltetrahydrofolate to homocysteine resulting in methionine formation. The protein is 5-methyltetrahydropteroyltriglutamate--homocysteine methyltransferase of Streptococcus pneumoniae serotype 4 (strain ATCC BAA-334 / TIGR4).